Reading from the N-terminus, the 811-residue chain is Bifunctional enzyme MurC/Ddl (811 aa).

A UDP-N-acetylmuramate--alanine ligase region spans residues 1–450; the sequence is MNRKNHYHFI…GNALKDFEPK (450 aa). Residues 111 to 117 and 607 to 662 contribute to the ATP site; these read GSHGKTT and LETF…SREI. Residues 451–811 are D-alanine--D-alanine ligase; the sequence is KLSVGVVCGG…NKQCLLTAKS (361 aa). An ATP-grasp domain is found at 574–785; it reads KRLAASVGVP…FEQIVHQLII (212 aa). 3 residues coordinate Mg(2+): Asp739, Glu752, and Asn754.

This sequence in the N-terminal section; belongs to the MurCDEF family. In the C-terminal section; belongs to the D-alanine--D-alanine ligase family. It depends on Mg(2+) as a cofactor. Requires Mn(2+) as cofactor.

Its subcellular location is the cytoplasm. It carries out the reaction UDP-N-acetyl-alpha-D-muramate + L-alanine + ATP = UDP-N-acetyl-alpha-D-muramoyl-L-alanine + ADP + phosphate + H(+). It catalyses the reaction 2 D-alanine + ATP = D-alanyl-D-alanine + ADP + phosphate + H(+). The protein operates within cell wall biogenesis; peptidoglycan biosynthesis. This chain is Bifunctional enzyme MurC/Ddl (murC/ddlA), found in Chlamydia caviae (strain ATCC VR-813 / DSM 19441 / 03DC25 / GPIC) (Chlamydophila caviae).